We begin with the raw amino-acid sequence, 639 residues long: Protein zwilch homolog (639 aa).

The segment covering 76–95 has biased composition (basic and acidic residues); that stretch reads QKTSSLLNRRENKKTIKSEK. The segment at 76 to 116 is disordered; that stretch reads QKTSSLLNRRENKKTIKSEKEDESMDMETAEGDKENTVSET. Positions 96 to 105 are enriched in acidic residues; sequence EDESMDMETA.

It belongs to the ZWILCH family. In terms of assembly, component of the RZZ complex composed of rod-1, czw-1 and zwl-1. Interacts with the spindly-like protein spdl-1. Interacts with NDC80 complex component ndc-80.

The protein localises to the cytoplasm. It localises to the cell cortex. It is found in the chromosome. The protein resides in the centromere. Its subcellular location is the kinetochore. The protein localises to the cytoskeleton. It localises to the spindle. Essential component of the mitotic checkpoint, which prevents cells from prematurely exiting mitosis. Required for chromosome segregation, the assembly of the dynein-dynactin and mdf-1-mdf-2 complexes onto kinetochores and spindle pole separation. Its function related to the spindle assembly machinery and kinetochore-microtubule attachments likely depends on its association in the mitotic RZZ complex. The RZZ complex recruits the spindly-like protein spdl-1 to kinetochores. To prevent irregular chromosome segregation, the complex also inhibits the attachment of the kinetochore-associated NDC80 complex to microtubules. The recruitment of spdl-1 to kinetochores relieves this inhibition. Required for embryonic development. This chain is Protein zwilch homolog (zwl-1), found in Caenorhabditis briggsae.